Consider the following 296-residue polypeptide: UDP-N-acetylenolpyruvoylglucosamine reductase (296 aa).

In terms of domain architecture, FAD-binding PCMH-type spans 18–189; it reads LGGRALAEVR…TGADIVLRRG (172 aa). Arg166 is a catalytic residue. Cys218 (proton donor) is an active-site residue. Glu289 is an active-site residue.

The protein belongs to the MurB family. FAD is required as a cofactor.

Its subcellular location is the cytoplasm. The enzyme catalyses UDP-N-acetyl-alpha-D-muramate + NADP(+) = UDP-N-acetyl-3-O-(1-carboxyvinyl)-alpha-D-glucosamine + NADPH + H(+). Its pathway is cell wall biogenesis; peptidoglycan biosynthesis. Functionally, cell wall formation. The polypeptide is UDP-N-acetylenolpyruvoylglucosamine reductase (Nitratidesulfovibrio vulgaris (strain ATCC 29579 / DSM 644 / CCUG 34227 / NCIMB 8303 / VKM B-1760 / Hildenborough) (Desulfovibrio vulgaris)).